The sequence spans 384 residues: Glucose-fructose oxidoreductase domain-containing protein 2 (384 aa).

The first 25 residues, 1–25 (MMTLPGIGVFGTGNTARVLIQLLRA), serve as a signal peptide directing secretion. A disordered region spans residues 358–384 (GEWESVELTNEETDSNQNLSEVIQHNL). Polar residues predominate over residues 372–384 (SNQNLSEVIQHNL).

The protein belongs to the Gfo/Idh/MocA family.

The protein localises to the secreted. It localises to the extracellular space. Its subcellular location is the extracellular matrix. Functionally, promotes matrix assembly. This is Glucose-fructose oxidoreductase domain-containing protein 2 (gfod2) from Xenopus laevis (African clawed frog).